The chain runs to 272 residues: MMACHC-like protein (272 aa).

Residues aspartate 121, 132–135 (ILMQ), and 146–148 (YYQ) each bind substrate.

It belongs to the MMACHC family. The cofactor is FAD. FMN serves as cofactor.

The protein localises to the cytoplasm. Its function is as follows. Catalyzes the reductive dealkylation of cyanocobalamin to cob(II)alamin, using FAD or FMN as cofactor and NADPH as cosubstrate. Can also catalyze the glutathione-dependent reductive demethylation of methylcobalamin, and, with much lower efficiency, the glutathione-dependent reductive demethylation of adenosylcobalamin. Under anaerobic conditions cob(I)alamin is the first product; it is highly reactive and is converted to aquocob(II)alamin in the presence of oxygen. Binds cyanocobalamin, adenosylcobalamin, methylcobalamin and other, related vitamin B12 derivatives. The protein is MMACHC-like protein (cblc-1) of Caenorhabditis elegans.